A 311-amino-acid polypeptide reads, in one-letter code: tRNA (guanine-N(7)-)-methyltransferase (311 aa).

Glutamate 28, glutamate 53, and aspartate 103 together coordinate S-adenosyl-L-methionine. The active site involves aspartate 103. Substrate-binding residues include lysine 107 and aspartate 139.

The protein belongs to the class I-like SAM-binding methyltransferase superfamily. TrmB family.

It catalyses the reaction guanosine(46) in tRNA + S-adenosyl-L-methionine = N(7)-methylguanosine(46) in tRNA + S-adenosyl-L-homocysteine. The protein operates within tRNA modification; N(7)-methylguanine-tRNA biosynthesis. Catalyzes the formation of N(7)-methylguanine at position 46 (m7G46) in tRNA. The protein is tRNA (guanine-N(7)-)-methyltransferase of Thermus thermophilus (strain ATCC BAA-163 / DSM 7039 / HB27).